Here is a 364-residue protein sequence, read N- to C-terminus: Aminomethyltransferase (364 aa).

It belongs to the GcvT family. The glycine cleavage system is composed of four proteins: P, T, L and H.

It carries out the reaction N(6)-[(R)-S(8)-aminomethyldihydrolipoyl]-L-lysyl-[protein] + (6S)-5,6,7,8-tetrahydrofolate = N(6)-[(R)-dihydrolipoyl]-L-lysyl-[protein] + (6R)-5,10-methylene-5,6,7,8-tetrahydrofolate + NH4(+). The glycine cleavage system catalyzes the degradation of glycine. In Salmonella paratyphi A (strain AKU_12601), this protein is Aminomethyltransferase.